The primary structure comprises 452 residues: Gamma conglutin 1 (452 aa).

An N-terminal signal peptide occupies residues 1–33 (MAKNMAPILHILVISLSYSFLFVTSSSQNSQSL). Residues 61-432 (HWGNILKRTP…DLARSRVGFN (372 aa)) form the Peptidase A1 domain. 5 disulfides stabilise this stretch: Cys-89-Cys-179, Cys-103-Cys-116, Cys-108-Cys-134, Cys-119-Cys-129, and Cys-353-Cys-394. Asn-131 carries N-linked (GlcNAc...) asparagine glycosylation.

The protein belongs to the peptidase A1 family. As to quaternary structure, two-subunit monomeric unit made of alpha and beta subunits coupled by disulfide bonds (at pH 4.5 and under non-reducing conditions). Monomeric alpha and beta subunits in reducing conditions. Can also form oligomers including dimer, tetramer and cyclic hexamer (trimer of dimers) (at pH &gt; 5.5). Component of globulins complexes which accumulate in seeds. Interacts with flavonoids (e.g. apigenin glucosides) present in globulins complexes. In terms of processing, glycosylated on alpha chain at Asn-131; identified N-glycans bound are Man(2)(Xyl)(Fuc)GlcNAc(2), Man(3)(Xyl)(Fuc)GlcNAc(2), GlcNAcMan(3)(Xyl)(Fuc)GlcNAc(2) and GlcNAc(2)Man(3)(Xyl)(Fuc)GlcNAc(2). In terms of tissue distribution, expressed in developing seeds and in the young roots and cotyledons of germinating seeds and young seedlings.

It is found in the secreted. It localises to the extracellular space. Sulfur-rich seed storage protein that remains undegraded at germination. The uncleaved form exhibits some inhibitory activity against GH11 xylanase from T.longibrachiatum, more at pH 7 than at pH 5.3, but not against GH12 xyloglucan-specific endoglucanase (XEG) from A.aculeatus. Binds to model phospholipid membranes containing dimyristoyl phosphatidylglycerol (DMPG), dioleoyl phosphatidic acid (DOPA) or mixture of dimyristoyl phosphatidylcholine and dimyristoyl phosphatidylglycerol (DMPC:DMPG), or mixture of dioleoyl phosphatidic acid and dioleoyl phosphatidylcholine (DOPC:DOPA). This chain is Gamma conglutin 1, found in Lupinus albus (White lupine).